Reading from the N-terminus, the 249-residue chain is MASLNQDQIKILEQSRQRLVQLTRSLASLIGSLNQSDPLPSWSSLQSQAGIISNNLVSISEHLADNKDLLSALVAYPGPSYPGRTQAPTLEQLLRTKLDPRVEDWVSRGRRAGASALEDRGALSESALAELWDWAPVEANQEARRRNWGGNFTLEEREMGIQNVVTGLRRQLEDEDEEASESEEEVEEEEMEVVGVRRRSGAGAGLEFDIAAPAPGSRQQQQQQKAAGPAVPLEDILRYMTTGIPPTQR.

Residues 154 to 200 (LEEREMGIQNVVTGLRRQLEDEDEEASESEEEVEEEEMEVVGVRRRS) adopt a coiled-coil conformation. The disordered stretch occupies residues 170 to 249 (RQLEDEDEEA…MTTGIPPTQR (80 aa)). Positions 173 to 192 (EDEDEEASESEEEVEEEEME) are enriched in acidic residues. Low complexity predominate over residues 211 to 232 (AAPAPGSRQQQQQQKAAGPAVP).

It belongs to the Mediator complex subunit 8 family. In terms of assembly, component of the Mediator complex.

Its subcellular location is the nucleus. Its function is as follows. Component of the Mediator complex, a coactivator involved in the regulated transcription of nearly all RNA polymerase II-dependent genes. Mediator functions as a bridge to convey information from gene-specific regulatory proteins to the basal RNA polymerase II transcription machinery. Mediator is recruited to promoters by direct interactions with regulatory proteins and serves as a scaffold for the assembly of a functional preinitiation complex with RNA polymerase II and the general transcription factors. This Aspergillus fumigatus (strain ATCC MYA-4609 / CBS 101355 / FGSC A1100 / Af293) (Neosartorya fumigata) protein is Mediator of RNA polymerase II transcription subunit 8 (med8).